The following is a 159-amino-acid chain: Protein Smg homolog (159 aa).

The protein belongs to the Smg family.

This is Protein Smg homolog from Shewanella amazonensis (strain ATCC BAA-1098 / SB2B).